The sequence spans 410 residues: Histidine--tRNA ligase (410 aa).

This sequence belongs to the class-II aminoacyl-tRNA synthetase family. In terms of assembly, homodimer.

It localises to the cytoplasm. The catalysed reaction is tRNA(His) + L-histidine + ATP = L-histidyl-tRNA(His) + AMP + diphosphate + H(+). This Elusimicrobium minutum (strain Pei191) protein is Histidine--tRNA ligase.